The following is a 612-amino-acid chain: Dihydroxy-acid dehydratase (612 aa).

D81 serves as a coordination point for Mg(2+). C122 serves as a coordination point for [2Fe-2S] cluster. Mg(2+) is bound by residues D123 and K124. K124 is subject to N6-carboxylysine. C193 contributes to the [2Fe-2S] cluster binding site. E489 serves as a coordination point for Mg(2+). The Proton acceptor role is filled by S515.

It belongs to the IlvD/Edd family. In terms of assembly, homodimer. Requires [2Fe-2S] cluster as cofactor. The cofactor is Mg(2+).

The catalysed reaction is (2R)-2,3-dihydroxy-3-methylbutanoate = 3-methyl-2-oxobutanoate + H2O. The enzyme catalyses (2R,3R)-2,3-dihydroxy-3-methylpentanoate = (S)-3-methyl-2-oxopentanoate + H2O. The protein operates within amino-acid biosynthesis; L-isoleucine biosynthesis; L-isoleucine from 2-oxobutanoate: step 3/4. It functions in the pathway amino-acid biosynthesis; L-valine biosynthesis; L-valine from pyruvate: step 3/4. Functionally, functions in the biosynthesis of branched-chain amino acids. Catalyzes the dehydration of (2R,3R)-2,3-dihydroxy-3-methylpentanoate (2,3-dihydroxy-3-methylvalerate) into 2-oxo-3-methylpentanoate (2-oxo-3-methylvalerate) and of (2R)-2,3-dihydroxy-3-methylbutanoate (2,3-dihydroxyisovalerate) into 2-oxo-3-methylbutanoate (2-oxoisovalerate), the penultimate precursor to L-isoleucine and L-valine, respectively. This Xanthomonas campestris pv. campestris (strain B100) protein is Dihydroxy-acid dehydratase.